We begin with the raw amino-acid sequence, 280 residues long: MLMQIADFEIGLNNPLFLIAGPCVIESEALVMDVAGELKSITQQLDMPFIFKASFDKANRSSHLSYRGPGIEKGLTILEKVKKTLEVPIITDVHEDTPLQEVAAVVDVLQTPAFLCRQSNFIRSVAACGKPVNIKKGQFLAPWEMKQVVAKAWATGNKKIMVCERGYSFGYNNLISDMRALAILRETACPVIFDATHSVQLPGGHGTSSGGQREFVPVLARAATAAGIAGIFMETHPDPDRALSDGPNSWPLAKMQPLLETLKELDKVVKNAGFLEQSSE.

Belongs to the KdsA family.

The protein resides in the cytoplasm. The enzyme catalyses D-arabinose 5-phosphate + phosphoenolpyruvate + H2O = 3-deoxy-alpha-D-manno-2-octulosonate-8-phosphate + phosphate. Its pathway is carbohydrate biosynthesis; 3-deoxy-D-manno-octulosonate biosynthesis; 3-deoxy-D-manno-octulosonate from D-ribulose 5-phosphate: step 2/3. It participates in bacterial outer membrane biogenesis; lipopolysaccharide biosynthesis. This Coxiella burnetii (strain CbuK_Q154) (Coxiella burnetii (strain Q154)) protein is 2-dehydro-3-deoxyphosphooctonate aldolase.